A 354-amino-acid polypeptide reads, in one-letter code: Uroporphyrinogen decarboxylase (354 aa).

Substrate-binding positions include 27–31 (RQAGR), Asp77, Tyr154, Ser209, and His327.

Belongs to the uroporphyrinogen decarboxylase family. In terms of assembly, homodimer.

The protein localises to the cytoplasm. The catalysed reaction is uroporphyrinogen III + 4 H(+) = coproporphyrinogen III + 4 CO2. The protein operates within porphyrin-containing compound metabolism; protoporphyrin-IX biosynthesis; coproporphyrinogen-III from 5-aminolevulinate: step 4/4. In terms of biological role, catalyzes the decarboxylation of four acetate groups of uroporphyrinogen-III to yield coproporphyrinogen-III. The polypeptide is Uroporphyrinogen decarboxylase (Shewanella piezotolerans (strain WP3 / JCM 13877)).